The following is a 901-amino-acid chain: Protein translocase subunit SecA 1 (901 aa).

Residues Gln-89, 107–111 (GEGKT), and Asp-502 contribute to the ATP site. The tract at residues 856–875 (AEAKASGDARPGFVEDDPST) is disordered. The Zn(2+) site is built by Cys-885, Cys-887, Cys-896, and His-897.

It belongs to the SecA family. Monomer and homodimer. Part of the essential Sec protein translocation apparatus which comprises SecA, SecYEG and auxiliary proteins SecDF-YajC and YidC. Requires Zn(2+) as cofactor.

The protein resides in the cell inner membrane. Its subcellular location is the cytoplasm. It catalyses the reaction ATP + H2O + cellular proteinSide 1 = ADP + phosphate + cellular proteinSide 2.. Functionally, part of the Sec protein translocase complex. Interacts with the SecYEG preprotein conducting channel. Has a central role in coupling the hydrolysis of ATP to the transfer of proteins into and across the cell membrane, serving both as a receptor for the preprotein-SecB complex and as an ATP-driven molecular motor driving the stepwise translocation of polypeptide chains across the membrane. The sequence is that of Protein translocase subunit SecA 1 from Ruegeria pomeroyi (strain ATCC 700808 / DSM 15171 / DSS-3) (Silicibacter pomeroyi).